Reading from the N-terminus, the 355-residue chain is Probable butyrate kinase (355 aa).

It belongs to the acetokinase family.

The protein resides in the cytoplasm. It carries out the reaction butanoate + ATP = butanoyl phosphate + ADP. The polypeptide is Probable butyrate kinase (Listeria welshimeri serovar 6b (strain ATCC 35897 / DSM 20650 / CCUG 15529 / CIP 8149 / NCTC 11857 / SLCC 5334 / V8)).